The sequence spans 206 residues: Ribosomal RNA small subunit methyltransferase G (206 aa).

S-adenosyl-L-methionine-binding positions include G71, F76, 122-123, and R135; that span reads AE.

Belongs to the methyltransferase superfamily. RNA methyltransferase RsmG family.

The protein resides in the cytoplasm. Functionally, specifically methylates the N7 position of a guanine in 16S rRNA. The chain is Ribosomal RNA small subunit methyltransferase G from Bacteroides fragilis (strain ATCC 25285 / DSM 2151 / CCUG 4856 / JCM 11019 / LMG 10263 / NCTC 9343 / Onslow / VPI 2553 / EN-2).